The chain runs to 239 residues: Purine nucleoside phosphorylase DeoD-type (239 aa).

An a purine D-ribonucleoside-binding site is contributed by His5. Phosphate contacts are provided by residues Gly21, Arg25, Arg44, and 88–91 (RVGS). Residues 180–182 (EME) and 204–205 (SD) contribute to the a purine D-ribonucleoside site. Asp205 functions as the Proton donor in the catalytic mechanism.

Belongs to the PNP/UDP phosphorylase family. In terms of assembly, homohexamer; trimer of homodimers.

It catalyses the reaction a purine D-ribonucleoside + phosphate = a purine nucleobase + alpha-D-ribose 1-phosphate. The enzyme catalyses a purine 2'-deoxy-D-ribonucleoside + phosphate = a purine nucleobase + 2-deoxy-alpha-D-ribose 1-phosphate. Its function is as follows. Catalyzes the reversible phosphorolytic breakdown of the N-glycosidic bond in the beta-(deoxy)ribonucleoside molecules, with the formation of the corresponding free purine bases and pentose-1-phosphate. This Salmonella heidelberg (strain SL476) protein is Purine nucleoside phosphorylase DeoD-type.